The sequence spans 418 residues: Glutamyl-tRNA reductase (418 aa).

Substrate-binding positions include 49–52, serine 109, 114–116, and glutamine 120; these read TCNR and EPQ. The Nucleophile role is filled by cysteine 50. NADP(+) is bound at residue 189-194; that stretch reads GAGETI.

This sequence belongs to the glutamyl-tRNA reductase family. Homodimer.

It carries out the reaction (S)-4-amino-5-oxopentanoate + tRNA(Glu) + NADP(+) = L-glutamyl-tRNA(Glu) + NADPH + H(+). It participates in porphyrin-containing compound metabolism; protoporphyrin-IX biosynthesis; 5-aminolevulinate from L-glutamyl-tRNA(Glu): step 1/2. Functionally, catalyzes the NADPH-dependent reduction of glutamyl-tRNA(Glu) to glutamate 1-semialdehyde (GSA). This is Glutamyl-tRNA reductase from Salmonella heidelberg (strain SL476).